The primary structure comprises 128 residues: Glycine cleavage system H protein (128 aa).

The region spanning 24-106 (VATVGITAFA…YNNGWLLKIK (83 aa)) is the Lipoyl-binding domain. Lys-65 is subject to N6-lipoyllysine.

Belongs to the GcvH family. The glycine cleavage system is composed of four proteins: P, T, L and H. (R)-lipoate is required as a cofactor.

Its function is as follows. The glycine cleavage system catalyzes the degradation of glycine. The H protein shuttles the methylamine group of glycine from the P protein to the T protein. The sequence is that of Glycine cleavage system H protein from Acaryochloris marina (strain MBIC 11017).